The chain runs to 455 residues: Serine--tRNA ligase (455 aa).

Residue T252–E254 participates in L-serine binding. ATP-binding positions include R283–E285 and V299. E306 provides a ligand contact to L-serine. Residue E370 to S373 coordinates ATP. T406 lines the L-serine pocket.

This sequence belongs to the class-II aminoacyl-tRNA synthetase family. Type-1 seryl-tRNA synthetase subfamily. As to quaternary structure, homodimer. The tRNA molecule binds across the dimer.

It is found in the cytoplasm. It catalyses the reaction tRNA(Ser) + L-serine + ATP = L-seryl-tRNA(Ser) + AMP + diphosphate + H(+). The catalysed reaction is tRNA(Sec) + L-serine + ATP = L-seryl-tRNA(Sec) + AMP + diphosphate + H(+). It functions in the pathway aminoacyl-tRNA biosynthesis; selenocysteinyl-tRNA(Sec) biosynthesis; L-seryl-tRNA(Sec) from L-serine and tRNA(Sec): step 1/1. In terms of biological role, catalyzes the attachment of serine to tRNA(Ser). Is also able to aminoacylate tRNA(Sec) with serine, to form the misacylated tRNA L-seryl-tRNA(Sec), which will be further converted into selenocysteinyl-tRNA(Sec). The polypeptide is Serine--tRNA ligase (Thermococcus gammatolerans (strain DSM 15229 / JCM 11827 / EJ3)).